A 261-amino-acid polypeptide reads, in one-letter code: Ribonuclease HII (261 aa).

An RNase H type-2 domain is found at 72–260 (AVICGIDEVG…IKSIVLEKLD (189 aa)). A divalent metal cation is bound by residues Asp-78, Glu-79, and Asp-170.

The protein belongs to the RNase HII family. Requires Mn(2+) as cofactor. It depends on Mg(2+) as a cofactor.

It localises to the cytoplasm. The enzyme catalyses Endonucleolytic cleavage to 5'-phosphomonoester.. In terms of biological role, endonuclease that specifically degrades the RNA of RNA-DNA hybrids. This is Ribonuclease HII from Staphylococcus carnosus (strain TM300).